A 142-amino-acid chain; its full sequence is Transcriptional regulator MraZ (142 aa).

2 consecutive SpoVT-AbrB domains span residues 5–47 (EYNH…PLGE) and 76–119 (ANEV…SKEK).

Belongs to the MraZ family. In terms of assembly, forms oligomers.

The protein resides in the cytoplasm. It is found in the nucleoid. This chain is Transcriptional regulator MraZ, found in Clostridium acetobutylicum (strain ATCC 824 / DSM 792 / JCM 1419 / IAM 19013 / LMG 5710 / NBRC 13948 / NRRL B-527 / VKM B-1787 / 2291 / W).